Consider the following 421-residue polypeptide: O-glycosyltransferase braB (421 aa).

A disordered region spans residues 1–26 (MVPSVMEGAPQLGITSTDTSSAGVPP). Over residues 13–22 (GITSTDTSSA) the composition is skewed to polar residues.

Belongs to the afumC glycosyltransferase family.

It functions in the pathway secondary metabolite biosynthesis. Functionally, O-glycosyltransferase; part of the gene cluster that mediates the biosynthesis of the brasilane terpene glycosides brasilane D and E. The biosynthesis starts with the activity of the terpene cyclase braA that converts farnesyl pyrophosphate into the sesquiterpene alcohol trichobrasilenol. Subsequently, trichobrasilenol is glycosylated by the O-glycosyltransferase braB putatively using UDP-GlcNAc as sugar donor to yield brasilane A. The latter then undergoes two rounds of oxidation performed by the cytochrome P450 monooxygenase braC. In the first round braC hydroxylates C-12 forming brasilane D, which serves as substrate in the second round to establish the epoxide at the bond between C-5 and C-10 and oxidize the alcohol at C-12 to an aldehyde leading to the final product brasilane E. BraB is also able to glycosylate geraniol, linalool, perillyl alcohol, 3,4-dichlorophenol and, to a lesser extend, benzyl alcohol. This chain is O-glycosyltransferase braB, found in Annulohypoxylon truncatum (Hypoxylon truncatum).